The sequence spans 269 residues: MTAPNIEMIASSLRNCSLNGGGGGGGGRRRGRRAAAAEGSDDSEGVTVELNSEVALPYHWEQCLDIRTGQVYYINWEDGTRTTIDPRSSSAYSPSPASRSASSSSRRCSRARGRGGGGGAAAAASTTTSSGYTSVSSVGAVTAAAAAWRSHDSSGHGYGYGSYGYGYGYDGRDGDDEESSSSSSSSSSSSSASSSRGSAVSSTLSSFSPTDESASGAGSGYAVGDNGAHVLVAAGCRACFMYFMVPKTADVCPKCGSSGLLHLSRNGYV.

A disordered region spans residues 17–44 (SLNGGGGGGGGRRRGRRAAAAEGSDDSE). An EAR motif is present at residues 47–52 (TVELNS). The 35-residue stretch at 54-88 (VALPYHWEQCLDIRTGQVYYINWEDGTRTTIDPRS) folds into the WW domain. Disordered stretches follow at residues 83 to 133 (TIDP…SGYT) and 174 to 218 (GDDE…SGAG). 3 stretches are compositionally biased toward low complexity: residues 87–106 (RSSS…SSSR), 121–133 (AAAA…SGYT), and 180–202 (SSSS…AVSS). Positions 203-212 (TLSSFSPTDE) are enriched in polar residues.

In terms of assembly, binds to HDG1.

Its function is as follows. Negatively regulates the cuticle development probably by interacting with the HD-ZIP IV transcription factor HDG1. The polypeptide is Protein CURLY FLAG LEAF 1 (Oryza sativa subsp. indica (Rice)).